The primary structure comprises 89 residues: Large ribosomal subunit protein bL27 (89 aa).

It belongs to the bacterial ribosomal protein bL27 family.

The protein is Large ribosomal subunit protein bL27 of Bacteroides thetaiotaomicron (strain ATCC 29148 / DSM 2079 / JCM 5827 / CCUG 10774 / NCTC 10582 / VPI-5482 / E50).